The primary structure comprises 388 residues: F-box/LRR-repeat protein At3g59190 (388 aa).

One can recognise an F-box domain in the interval 11–64 (KDIISNLPDALLCHVLSFLPTTEAASTSVLAKRWRFLLAFVPNLDLDNMIYDRP). LRR repeat units lie at residues 151-177 (KVSG…HLSA), 180-205 (FGDE…VMIK), 228-252 (CENI…EFTD), 313-345 (TMYL…TVET), and 346-371 (DERV…IFEV).

The protein is F-box/LRR-repeat protein At3g59190 of Arabidopsis thaliana (Mouse-ear cress).